The primary structure comprises 122 residues: Small ribosomal subunit protein uS13 (122 aa).

The segment at 99–122 (RGQRTHTNARTRKGPAKAIAGKKK) is disordered.

It belongs to the universal ribosomal protein uS13 family. As to quaternary structure, part of the 30S ribosomal subunit. Forms a loose heterodimer with protein S19. Forms two bridges to the 50S subunit in the 70S ribosome.

Located at the top of the head of the 30S subunit, it contacts several helices of the 16S rRNA. In the 70S ribosome it contacts the 23S rRNA (bridge B1a) and protein L5 of the 50S subunit (bridge B1b), connecting the 2 subunits; these bridges are implicated in subunit movement. Contacts the tRNAs in the A and P-sites. The sequence is that of Small ribosomal subunit protein uS13 from Rhodopseudomonas palustris (strain HaA2).